The primary structure comprises 489 residues: CBL-interacting serine/threonine-protein kinase 12 (489 aa).

Positions 26–280 constitute a Protein kinase domain; sequence YEMGKLLGHG…FPEIMENSWF (255 aa). ATP-binding positions include 32-40 and K55; that span reads LGHGTFAKV. The Proton acceptor role is filled by D148. The tract at residues 166-195 is activation loop; the sequence is DFGLSAVSDQIRQDGLFHTFCGTPAYVAPE. Phosphoserine is present on S170. T184 is subject to Phosphothreonine. The NAF domain occupies 336 to 360; sequence PRPASLNAFDIISFSQGFDLSGLFD. A PPI region spans residues 363-392; that stretch reads GEGSRFVSGAPVSKIISKLEEIAKVVSFTV.

Belongs to the protein kinase superfamily. CAMK Ser/Thr protein kinase family. SNF1 subfamily. In terms of assembly, interacts with CBL2 and CBL3. Mn(2+) is required as a cofactor. As to expression, expressed in roots and shoots.

It catalyses the reaction L-seryl-[protein] + ATP = O-phospho-L-seryl-[protein] + ADP + H(+). The catalysed reaction is L-threonyl-[protein] + ATP = O-phospho-L-threonyl-[protein] + ADP + H(+). Its function is as follows. CIPK serine-threonine protein kinases interact with CBL proteins. Binding of a CBL protein to the regulatory NAF domain of CIPK protein lead to the activation of the kinase in a calcium-dependent manner. The chain is CBL-interacting serine/threonine-protein kinase 12 (CIPK12) from Arabidopsis thaliana (Mouse-ear cress).